The primary structure comprises 314 residues: Ribosomal protein L11 methyltransferase (314 aa).

The S-adenosyl-L-methionine site is built by threonine 163, glycine 184, aspartate 206, and asparagine 248.

The protein belongs to the methyltransferase superfamily. PrmA family.

The protein localises to the cytoplasm. It catalyses the reaction L-lysyl-[protein] + 3 S-adenosyl-L-methionine = N(6),N(6),N(6)-trimethyl-L-lysyl-[protein] + 3 S-adenosyl-L-homocysteine + 3 H(+). In terms of biological role, methylates ribosomal protein L11. This chain is Ribosomal protein L11 methyltransferase, found in Lactobacillus delbrueckii subsp. bulgaricus (strain ATCC 11842 / DSM 20081 / BCRC 10696 / JCM 1002 / NBRC 13953 / NCIMB 11778 / NCTC 12712 / WDCM 00102 / Lb 14).